Consider the following 182-residue polypeptide: Ribosome-recycling factor (182 aa).

Residues 136-156 are disordered; it reads IRKQEKNSDISKDESRDLQDK.

This sequence belongs to the RRF family.

The protein resides in the cytoplasm. Responsible for the release of ribosomes from messenger RNA at the termination of protein biosynthesis. May increase the efficiency of translation by recycling ribosomes from one round of translation to another. The protein is Ribosome-recycling factor of Trichodesmium erythraeum (strain IMS101).